A 188-amino-acid chain; its full sequence is Probable RNA-binding protein 18 (188 aa).

Residues 23–104 (HRLWIGNIDP…KKLVVRWAHA (82 aa)) enclose the RRM domain. Residues 151–188 (EENPDDYSGPSAYTYNKPPDKREKRSQPYHKHFRKHRR) form a disordered region. Residues 177–188 (QPYHKHFRKHRR) show a composition bias toward basic residues.

This Danio rerio (Zebrafish) protein is Probable RNA-binding protein 18 (rbm18).